The chain runs to 276 residues: Transcriptional antiactivator ExsD (276 aa).

As to quaternary structure, can form homotrimer. Interacts with ExsA; this interaction inhibits ExsA activity. Interacts with ExsC; this interaction dissociates the ExsD-ExsA complex.

In terms of biological role, negative regulator of the type III secretion system regulon. Acts by disrupting transcriptional activator ExsA self-association and DNA-binding activity in absence of inducing signals. Upon host cell contact, this interaction is disrupted by the anti-antiactivator protein ExsC leading to ExsA activation. The protein is Transcriptional antiactivator ExsD (exsD) of Pseudomonas aeruginosa (strain ATCC 15692 / DSM 22644 / CIP 104116 / JCM 14847 / LMG 12228 / 1C / PRS 101 / PAO1).